The primary structure comprises 495 residues: Membrane-bound glycerophospholipid O-acyltransferase 1 (495 aa).

A run of 6 helical transmembrane segments spans residues 34–54, 70–90, 126–146, 180–200, 238–258, and 297–317; these read VNFV…RIYL, IFGI…LFVL, IYIF…MIVT, PSFL…AGPC, TGAV…FLTL, and YFAW…FSGV. Active-site residues include asparagine 350 and histidine 381. 3 helical membrane passes run 371 to 391, 426 to 446, and 450 to 470; these read VLTF…YFTF, TWAV…MLAV, and ISLY…IILF. Position 488 is a phosphoserine (serine 488).

Belongs to the membrane-bound acyltransferase family. Expressed in neutrophils.

It localises to the endoplasmic reticulum membrane. The catalysed reaction is a 1-acyl-sn-glycero-3-phospho-L-serine + an acyl-CoA = a 1,2-diacyl-sn-glycero-3-phospho-L-serine + CoA. The enzyme catalyses a 1-acyl-sn-glycero-3-phosphocholine + an acyl-CoA = a 1,2-diacyl-sn-glycero-3-phosphocholine + CoA. It catalyses the reaction a 1-acyl-sn-glycero-3-phosphoethanolamine + an acyl-CoA = a 1,2-diacyl-sn-glycero-3-phosphoethanolamine + CoA. It carries out the reaction 1-(9Z-octadecenoyl)-sn-glycero-3-phospho-L-serine + (9Z)-octadecenoyl-CoA = 1,2-di-(9Z)-octadecenoyl-sn-glycero-3-phospho-L-serine + CoA. The catalysed reaction is 1-(9Z-octadecenoyl)-sn-glycero-3-phospho-L-serine + octadecanoyl-CoA = 1-(9Z-octadecenoyl)-2-octadecanoyl-sn-glycero-3-phospho-L-serine + CoA. The enzyme catalyses 1-(9Z-octadecenoyl)-sn-glycero-3-phospho-L-serine + (9Z)-hexadecenoyl-CoA = 1-(9Z-octadecenoyl)-2-(9Z-hexadecenoyl)-sn-glycero-3-phospho-L-serine + CoA. It catalyses the reaction 1-(9Z-octadecenoyl)-sn-glycero-3-phospho-L-serine + (9Z,12Z)-octadecadienoyl-CoA = 1-(9Z-octadecenoyl)-2-(9Z,12Z-octadienoyl)-sn-glycero-3-phospho-L-serine + CoA. It carries out the reaction 1-hexadecanoyl-sn-glycero-3-phosphocholine + (9Z)-octadecenoyl-CoA = 1-hexadecanoyl-2-(9Z-octadecenoyl)-sn-glycero-3-phosphocholine + CoA. The catalysed reaction is a 1-O-(1Z-alkenyl)-sn-glycero-3-phosphoethanolamine + (9Z)-octadecenoyl-CoA = 1-O-(1Z)-alkenyl-2-(9Z)-octadecenoyl-sn-glycero-3-phosphoethanolamine + CoA. The enzyme catalyses 1-octadecanoyl-sn-glycero-3-phosphoethanolamine + (9Z)-octadecenoyl-CoA = 1-octadecanoyl-2-(9Z-octadecenoyl)-sn-glycero-3-phosphoethanolamine + CoA. It catalyses the reaction 1-(9Z-octadecenoyl)-sn-glycero-3-phosphoethanolamine + (9Z)-octadecenoyl-CoA = 1,2-di-(9Z-octadecenoyl)-sn-glycero-3-phosphoethanolamine + CoA. It carries out the reaction 1-hexadecanoyl-sn-glycero-3-phosphoethanolamine + (9Z)-octadecenoyl-CoA = 1-hexadecanoyl-2-(9Z-octadecenoyl)-sn-glycero-3-phosphoethanolamine + CoA. The catalysed reaction is 1-(10Z-heptadecenoyl)-sn-glycero-3-phosphoethanolamine + hexadecanoyl-CoA = 1-(10Z-heptadecenoyl)-2-hexadecanoyl-sn-glycero-3-phosphoethanolamine + CoA. The enzyme catalyses 1-(10Z-heptadecenoyl)-sn-glycero-3-phosphoethanolamine + (9Z)-octadecenoyl-CoA = 1-(10Z-heptadecenoyl)-2-(9Z-octadecenoyl)-sn-glycero-3-phosphoethanolamine + CoA. The protein operates within lipid metabolism; phospholipid metabolism. Partially inhibited by thimerosal. In terms of biological role, acyltransferase which catalyzes the transfer of an acyl group from an acyl-CoA towards a lysophospholipid producing a phospholipid and participates in the reacylation step of the phospholipid remodeling pathway also known as the Lands cycle. Acts on lysophosphatidylserine (1-acyl-2-hydroxy-sn-glycero-3-phospho-L-serine or LPS) and lysophosphatidylethanolamine (1-acyl-sn-glycero-3-phosphoethanolamine or LPE), and to a lesser extend lysophosphatidylcholine. Prefers oleoyl-CoA as the acyl donor and 1-oleoyl-LPE as acceptor. May play a role in neurite outgrowth during neuronal differentiation. The chain is Membrane-bound glycerophospholipid O-acyltransferase 1 from Homo sapiens (Human).